Consider the following 277-residue polypeptide: Large ribosomal subunit protein uL2 (277 aa).

The segment at glycine 222–lysine 277 is disordered.

Belongs to the universal ribosomal protein uL2 family. Part of the 50S ribosomal subunit. Forms a bridge to the 30S subunit in the 70S ribosome.

Functionally, one of the primary rRNA binding proteins. Required for association of the 30S and 50S subunits to form the 70S ribosome, for tRNA binding and peptide bond formation. It has been suggested to have peptidyltransferase activity; this is somewhat controversial. Makes several contacts with the 16S rRNA in the 70S ribosome. The chain is Large ribosomal subunit protein uL2 from Streptococcus agalactiae serotype Ia (strain ATCC 27591 / A909 / CDC SS700).